We begin with the raw amino-acid sequence, 197 residues long: FMN-dependent NADH:quinone oxidoreductase (197 aa).

Residues S10 and 17–19 contribute to the FMN site; that span reads SFS.

The protein belongs to the azoreductase type 1 family. In terms of assembly, homodimer. FMN is required as a cofactor.

It carries out the reaction 2 a quinone + NADH + H(+) = 2 a 1,4-benzosemiquinone + NAD(+). It catalyses the reaction N,N-dimethyl-1,4-phenylenediamine + anthranilate + 2 NAD(+) = 2-(4-dimethylaminophenyl)diazenylbenzoate + 2 NADH + 2 H(+). In terms of biological role, quinone reductase that provides resistance to thiol-specific stress caused by electrophilic quinones. Its function is as follows. Also exhibits azoreductase activity. Catalyzes the reductive cleavage of the azo bond in aromatic azo compounds to the corresponding amines. This Mycoplasmoides gallisepticum (strain R(low / passage 15 / clone 2)) (Mycoplasma gallisepticum) protein is FMN-dependent NADH:quinone oxidoreductase.